Here is a 170-residue protein sequence, read N- to C-terminus: Transcriptional repressor NrdR (170 aa).

A zinc finger spans residues 3–34 (CPFCRHPDSRVVDSRTSEDGSSIRRRRQCPEC). The ATP-cone domain occupies 46–136 (LSVVKRSGVA…VYRGFSSLED (91 aa)). A disordered region spans residues 148 to 170 (RENEGDPDADGSADAPVRLTTSV).

Belongs to the NrdR family. The cofactor is Zn(2+).

Functionally, negatively regulates transcription of bacterial ribonucleotide reductase nrd genes and operons by binding to NrdR-boxes. The polypeptide is Transcriptional repressor NrdR (Beutenbergia cavernae (strain ATCC BAA-8 / DSM 12333 / CCUG 43141 / JCM 11478 / NBRC 16432 / NCIMB 13614 / HKI 0122)).